A 421-amino-acid polypeptide reads, in one-letter code: Synaptotagmin-15 (421 aa).

Topologically, residues 1–4 (MAEQ) are extracellular. A helical; Signal-anchor for type III membrane protein transmembrane segment spans residues 5–29 (LALVIGGTIGGLLLLLLIGASCCLW). At 30–421 (RRFCATLTYE…WHALCRTTEP (392 aa)) the chain is on the cytoplasmic side. The tract at residues 47–68 (MATTAASSGQRDRPCQPHARTQ) is disordered. 2 consecutive C2 domains span residues 147-264 (CLGR…RRVI) and 278-399 (EFGD…EHWD).

It belongs to the synaptotagmin family. As to quaternary structure, homodimer.

Its subcellular location is the cell membrane. Its function is as follows. May be involved in the trafficking and exocytosis of secretory vesicles in non-neuronal tissues. The sequence is that of Synaptotagmin-15 (SYT15) from Homo sapiens (Human).